The primary structure comprises 179 residues: Ribosome maturation factor RimM (179 aa).

In terms of domain architecture, PRC barrel spans 96–175 (KDEYFWFDIE…IITVIGAMDI (80 aa)).

Belongs to the RimM family. As to quaternary structure, binds ribosomal protein uS19.

It is found in the cytoplasm. Functionally, an accessory protein needed during the final step in the assembly of 30S ribosomal subunit, possibly for assembly of the head region. Essential for efficient processing of 16S rRNA. May be needed both before and after RbfA during the maturation of 16S rRNA. It has affinity for free ribosomal 30S subunits but not for 70S ribosomes. In Sulfurimonas denitrificans (strain ATCC 33889 / DSM 1251) (Thiomicrospira denitrificans (strain ATCC 33889 / DSM 1251)), this protein is Ribosome maturation factor RimM.